A 203-amino-acid chain; its full sequence is SPbeta prophage-derived uncharacterized lipoprotein YonS (203 aa).

Residues 1–21 form the signal peptide; it reads MKLFKKLGILLLITSLILLAA. Cys22 carries the N-palmitoyl cysteine lipid modification. Cys22 carries S-diacylglycerol cysteine lipidation. The span at 27-46 shows a compositional bias: low complexity; sequence ESSSSSEDTNNATDTNTSES. The interval 27–57 is disordered; that stretch reads ESSSSSEDTNNATDTNTSESQDISVNGPEKV.

Its subcellular location is the cell membrane. This is SPbeta prophage-derived uncharacterized lipoprotein YonS (yonS) from Bacillus subtilis (strain 168).